We begin with the raw amino-acid sequence, 299 residues long: Putative zinc-binding protein ORF12 (299 aa).

The sequence is that of Putative zinc-binding protein ORF12 (ORF12) from Ictaluridae (bullhead catfishes).